A 164-amino-acid polypeptide reads, in one-letter code: Phosphopantetheine adenylyltransferase (164 aa).

Ser11 contacts substrate. ATP contacts are provided by residues 11 to 12 and His19; that span reads SF. Substrate-binding residues include Lys43, Ala76, and Arg90. ATP-binding positions include 91-93, Glu101, and 126-132; these read GLR and YQHISSS.

This sequence belongs to the bacterial CoaD family. As to quaternary structure, homohexamer. The cofactor is Mg(2+).

The protein resides in the cytoplasm. It carries out the reaction (R)-4'-phosphopantetheine + ATP + H(+) = 3'-dephospho-CoA + diphosphate. The protein operates within cofactor biosynthesis; coenzyme A biosynthesis; CoA from (R)-pantothenate: step 4/5. Its function is as follows. Reversibly transfers an adenylyl group from ATP to 4'-phosphopantetheine, yielding dephospho-CoA (dPCoA) and pyrophosphate. The protein is Phosphopantetheine adenylyltransferase of Streptococcus gordonii (strain Challis / ATCC 35105 / BCRC 15272 / CH1 / DL1 / V288).